Here is a 97-residue protein sequence, read N- to C-terminus: Large ribosomal subunit protein uL23 (97 aa).

The protein belongs to the universal ribosomal protein uL23 family. In terms of assembly, part of the 50S ribosomal subunit. Contacts protein L29, and trigger factor when it is bound to the ribosome.

In terms of biological role, one of the early assembly proteins it binds 23S rRNA. One of the proteins that surrounds the polypeptide exit tunnel on the outside of the ribosome. Forms the main docking site for trigger factor binding to the ribosome. The polypeptide is Large ribosomal subunit protein uL23 (Rhizobium etli (strain CIAT 652)).